A 166-amino-acid polypeptide reads, in one-letter code: Sec-independent protein translocase protein TatB (166 aa).

The chain crosses the membrane as a helical span at residues 1–21; sequence MIDIAFSKLAIIGVAALVFIG. The tract at residues 85–146 is disordered; that stretch reads DSSLHSAWDE…SGQKSRVISG (62 aa).

Belongs to the TatB family. As to quaternary structure, the Tat system comprises two distinct complexes: a TatABC complex, containing multiple copies of TatA, TatB and TatC subunits, and a separate TatA complex, containing only TatA subunits. Substrates initially bind to the TatABC complex, which probably triggers association of the separate TatA complex to form the active translocon.

It localises to the cell inner membrane. Functionally, part of the twin-arginine translocation (Tat) system that transports large folded proteins containing a characteristic twin-arginine motif in their signal peptide across membranes. Together with TatC, TatB is part of a receptor directly interacting with Tat signal peptides. TatB may form an oligomeric binding site that transiently accommodates folded Tat precursor proteins before their translocation. This chain is Sec-independent protein translocase protein TatB, found in Herminiimonas arsenicoxydans.